Reading from the N-terminus, the 198-residue chain is HTH-type transcriptional regulator BetI (198 aa).

The HTH tetR-type domain occupies Lys8–Leu68. Residues Ser31–Phe50 constitute a DNA-binding region (H-T-H motif).

It participates in amine and polyamine biosynthesis; betaine biosynthesis via choline pathway [regulation]. Functionally, repressor involved in the biosynthesis of the osmoprotectant glycine betaine. It represses transcription of the choline transporter BetT and the genes of BetAB involved in the synthesis of glycine betaine. The sequence is that of HTH-type transcriptional regulator BetI from Vibrio vulnificus (strain YJ016).